The chain runs to 608 residues: Threonine--tRNA ligase (608 aa).

Residues 1-143 (MRVLYIHAER…VFKPEEAKTE (143 aa)) form an editing domain region. Catalytic stretches follow at residues 194–490 (PKYL…PRLP) and 195–490 (KYLD…PRLP). 3 residues coordinate Zn(2+): Cys287, His338, and His459.

The protein belongs to the class-II aminoacyl-tRNA synthetase family. As to quaternary structure, homodimer. The cofactor is Zn(2+).

The protein resides in the cytoplasm. The enzyme catalyses tRNA(Thr) + L-threonine + ATP = L-threonyl-tRNA(Thr) + AMP + diphosphate + H(+). Functionally, catalyzes the attachment of threonine to tRNA(Thr) in a two-step reaction: L-threonine is first activated by ATP to form Thr-AMP and then transferred to the acceptor end of tRNA(Thr). Also edits incorrectly charged L-seryl-tRNA(Thr). The sequence is that of Threonine--tRNA ligase from Pyrobaculum arsenaticum (strain DSM 13514 / JCM 11321 / PZ6).